The chain runs to 132 residues: Translation initiation factor 5A (132 aa).

K36 carries the post-translational modification Hypusine.

It belongs to the eIF-5A family.

It localises to the cytoplasm. Functions by promoting the formation of the first peptide bond. The protein is Translation initiation factor 5A (eIF5A) of Pyrobaculum islandicum (strain DSM 4184 / JCM 9189 / GEO3).